A 334-amino-acid polypeptide reads, in one-letter code: GTPase Obg (334 aa).

One can recognise an Obg domain in the interval 1–159 (MRFVDEVVIK…KEVRLELNLL (159 aa)). The region spanning 160-331 (ADVALLGLPN…LAKKLNEFLQ (172 aa)) is the OBG-type G domain. GTP contacts are provided by residues 166-173 (GLPNAGKS), 191-195 (FTTMY), 212-215 (DIPG), 282-285 (NKID), and 312-314 (SAA). Serine 173 and threonine 193 together coordinate Mg(2+).

This sequence belongs to the TRAFAC class OBG-HflX-like GTPase superfamily. OBG GTPase family. As to quaternary structure, monomer. It depends on Mg(2+) as a cofactor.

Its subcellular location is the cytoplasm. In terms of biological role, an essential GTPase which binds GTP, GDP and possibly (p)ppGpp with moderate affinity, with high nucleotide exchange rates and a fairly low GTP hydrolysis rate. Plays a role in control of the cell cycle, stress response, ribosome biogenesis and in those bacteria that undergo differentiation, in morphogenesis control. The protein is GTPase Obg of Francisella tularensis subsp. tularensis (strain FSC 198).